A 184-amino-acid polypeptide reads, in one-letter code: Translation initiation factor IF-3 (184 aa).

This sequence belongs to the IF-3 family. As to quaternary structure, monomer.

It is found in the cytoplasm. Its function is as follows. IF-3 binds to the 30S ribosomal subunit and shifts the equilibrium between 70S ribosomes and their 50S and 30S subunits in favor of the free subunits, thus enhancing the availability of 30S subunits on which protein synthesis initiation begins. This Mycoplasma genitalium (strain ATCC 33530 / DSM 19775 / NCTC 10195 / G37) (Mycoplasmoides genitalium) protein is Translation initiation factor IF-3.